Consider the following 217-residue polypeptide: MEHSSWHALIKAQLPEGYFGKINQFMEQVYSQGIIYPPKEKVFQALLTTLLEEVKVVILGQDPYHGPGQAQGLSFSVPDSIPAPPSLQNILKELSDDIGVKKSHDLTAWAEQGVLLLNACLTVPAGQANGHAGQIWEPFTDAVIQVVNHLDRPVVFVLWGAYARKKKALVTNPHHLIIESAHPSPLSVYRGFWGSKPFSKANTFLKETGQEPIDWLR.

Catalysis depends on D62, which acts as the Proton acceptor.

This sequence belongs to the uracil-DNA glycosylase (UDG) superfamily. UNG family.

It localises to the cytoplasm. It carries out the reaction Hydrolyzes single-stranded DNA or mismatched double-stranded DNA and polynucleotides, releasing free uracil.. Functionally, excises uracil residues from the DNA which can arise as a result of misincorporation of dUMP residues by DNA polymerase or due to deamination of cytosine. The chain is Uracil-DNA glycosylase from Streptococcus pneumoniae serotype 19F (strain G54).